The chain runs to 266 residues: Small ribosomal subunit protein eS1 (266 aa).

Residues 233 to 266 form a disordered region; it reads GEGGGSSAAKPSGDDTGAKVDRADGYEPPIQETV. Over residues 244-257 the composition is skewed to basic and acidic residues; that stretch reads SGDDTGAKVDRADG.

Belongs to the eukaryotic ribosomal protein eS1 family. Component of the small ribosomal subunit. Mature ribosomes consist of a small (40S) and a large (60S) subunit. The 40S subunit contains about 33 different proteins and 1 molecule of RNA (18S). The 60S subunit contains about 49 different proteins and 3 molecules of RNA (28S, 5.8S and 5S). Part of the small subunit (SSU) processome, composed of more than 70 proteins and the RNA chaperone small nucleolar RNA (snoRNA) U3.

The protein localises to the cytoplasm. It localises to the nucleus. It is found in the nucleolus. In terms of biological role, component of the small ribosomal subunit. The ribosome is a large ribonucleoprotein complex responsible for the synthesis of proteins in the cell. Part of the small subunit (SSU) processome, first precursor of the small eukaryotic ribosomal subunit. During the assembly of the SSU processome in the nucleolus, many ribosome biogenesis factors, an RNA chaperone and ribosomal proteins associate with the nascent pre-rRNA and work in concert to generate RNA folding, modifications, rearrangements and cleavage as well as targeted degradation of pre-ribosomal RNA by the RNA exosome. May play a role during erythropoiesis. The sequence is that of Small ribosomal subunit protein eS1 (rps3a) from Salmo salar (Atlantic salmon).